The primary structure comprises 93 residues: Ribonuclease P protein component 1 (93 aa).

It belongs to the eukaryotic/archaeal RNase P protein component 1 family. In terms of assembly, consists of a catalytic RNA component and at least 4-5 protein subunits.

It localises to the cytoplasm. The enzyme catalyses Endonucleolytic cleavage of RNA, removing 5'-extranucleotides from tRNA precursor.. Part of ribonuclease P, a protein complex that generates mature tRNA molecules by cleaving their 5'-ends. This Methanothermobacter thermautotrophicus (strain ATCC 29096 / DSM 1053 / JCM 10044 / NBRC 100330 / Delta H) (Methanobacterium thermoautotrophicum) protein is Ribonuclease P protein component 1.